The following is a 477-amino-acid chain: Bifunctional protein HldE (477 aa).

Residues 1–318 form a ribokinase region; the sequence is MKVNLPAFER…ENAVRGRADT (318 aa). Position 195–198 (195–198) interacts with ATP; the sequence is NLSE. Asp264 is a catalytic residue. Residues 344 to 477 form a cytidylyltransferase region; sequence MTNGVFDILH…IKKIQTESEK (134 aa).

This sequence in the N-terminal section; belongs to the carbohydrate kinase PfkB family. It in the C-terminal section; belongs to the cytidylyltransferase family. As to quaternary structure, homodimer.

It carries out the reaction D-glycero-beta-D-manno-heptose 7-phosphate + ATP = D-glycero-beta-D-manno-heptose 1,7-bisphosphate + ADP + H(+). The enzyme catalyses D-glycero-beta-D-manno-heptose 1-phosphate + ATP + H(+) = ADP-D-glycero-beta-D-manno-heptose + diphosphate. It functions in the pathway nucleotide-sugar biosynthesis; ADP-L-glycero-beta-D-manno-heptose biosynthesis; ADP-L-glycero-beta-D-manno-heptose from D-glycero-beta-D-manno-heptose 7-phosphate: step 1/4. It participates in nucleotide-sugar biosynthesis; ADP-L-glycero-beta-D-manno-heptose biosynthesis; ADP-L-glycero-beta-D-manno-heptose from D-glycero-beta-D-manno-heptose 7-phosphate: step 3/4. Catalyzes the phosphorylation of D-glycero-D-manno-heptose 7-phosphate at the C-1 position to selectively form D-glycero-beta-D-manno-heptose-1,7-bisphosphate. Its function is as follows. Catalyzes the ADP transfer from ATP to D-glycero-beta-D-manno-heptose 1-phosphate, yielding ADP-D-glycero-beta-D-manno-heptose. This chain is Bifunctional protein HldE, found in Salmonella agona (strain SL483).